The primary structure comprises 163 residues: Ribosome maturation factor RimP (163 aa).

It belongs to the RimP family.

The protein resides in the cytoplasm. Its function is as follows. Required for maturation of 30S ribosomal subunits. The protein is Ribosome maturation factor RimP of Bordetella petrii (strain ATCC BAA-461 / DSM 12804 / CCUG 43448).